Here is a 944-residue protein sequence, read N- to C-terminus: UvrABC system protein A (944 aa).

31 to 38 is a binding site for ATP; sequence GLSGSGKS. The C4-type zinc-finger motif lies at 253–280; that stretch reads CPVCGHAISELEPKLFSFNNPAGACPTC. ABC transporter domains lie at 309-586 and 606-936; these read WDRR…PDSL and RNKK…HYLK. 639–646 provides a ligand contact to ATP; the sequence is GVSGSGKS. The C4-type zinc finger occupies 739-765; the sequence is CEACQGDGLIKVEMHFLPDIYVPCDVC.

This sequence belongs to the ABC transporter superfamily. UvrA family. In terms of assembly, forms a heterotetramer with UvrB during the search for lesions.

It localises to the cytoplasm. In terms of biological role, the UvrABC repair system catalyzes the recognition and processing of DNA lesions. UvrA is an ATPase and a DNA-binding protein. A damage recognition complex composed of 2 UvrA and 2 UvrB subunits scans DNA for abnormalities. When the presence of a lesion has been verified by UvrB, the UvrA molecules dissociate. The protein is UvrABC system protein A of Pseudomonas putida (strain ATCC 47054 / DSM 6125 / CFBP 8728 / NCIMB 11950 / KT2440).